The sequence spans 102 residues: 10 kDa heat shock protein, mitochondrial (102 aa).

An N-acetylalanine modification is found at Ala-2. The residue at position 8 (Lys-8) is an N6-acetyllysine. Lys-28 carries the N6-succinyllysine modification. Lys-40 carries the N6-acetyllysine; alternate modification. N6-malonyllysine; alternate is present on residues Lys-40, Lys-54, and Lys-56. Residues Lys-40, Lys-54, Lys-56, Lys-66, and Lys-70 each carry the N6-succinyllysine; alternate modification. N6-acetyllysine; alternate is present on residues Lys-56, Lys-66, and Lys-70. Residue Thr-79 is modified to Phosphothreonine. Lys-80 and Lys-86 each carry N6-acetyllysine; alternate. Lys-80 and Lys-86 each carry N6-succinyllysine; alternate. Residue Lys-99 is modified to N6-acetyllysine.

Belongs to the GroES chaperonin family. Homoheptamer arranged in a ring structure. 2 heptameric Hsp10 rings interact with a Hsp60 tetradecamer in the structure of a back-to-back double heptameric ring to form the symmetrical football complex.

The protein resides in the mitochondrion matrix. Its function is as follows. Co-chaperonin implicated in mitochondrial protein import and macromolecular assembly. Together with Hsp60, facilitates the correct folding of imported proteins. May also prevent misfolding and promote the refolding and proper assembly of unfolded polypeptides generated under stress conditions in the mitochondrial matrix. The functional units of these chaperonins consist of heptameric rings of the large subunit Hsp60, which function as a back-to-back double ring. In a cyclic reaction, Hsp60 ring complexes bind one unfolded substrate protein per ring, followed by the binding of ATP and association with 2 heptameric rings of the co-chaperonin Hsp10. This leads to sequestration of the substrate protein in the inner cavity of Hsp60 where, for a certain period of time, it can fold undisturbed by other cell components. Synchronous hydrolysis of ATP in all Hsp60 subunits results in the dissociation of the chaperonin rings and the release of ADP and the folded substrate protein. This Bos taurus (Bovine) protein is 10 kDa heat shock protein, mitochondrial (HSPE1).